Reading from the N-terminus, the 503-residue chain is MAITVSSRQLFIDGEWRVPILNKRIPNINPSTENIIGDIPAATKEDVDLAVDAAKRAISRKNGRDWSAASGSLRARYLRAIAAKIKEKKDELGKLESIDCGKPLEEALADLDDVVACFEYYAGLAEELDSKQKAPISLPMDTFKSYILKEPIGVVALITPWNYPFLMATWKIAPALAAGCAAILKPSELASVTCLELGEICKEVGLPRGVLNIVTGLGHEAGASLASHPDVDKISFTGSSATGSKIMTTAAQLVKPVSLELGGKSPIVVFEDVDLDKVAEWTVFGCFFTNGQICSATSRLIVHESIAVEFVDKLVKWAENIKISDPLEEGCRLGPIVSEAQYKKVLNCISSAKSEGATILTGGRRPEHLKKGYFVEPTIITDVTTSMQIWREEVFGPVLAVKTFSTEEEAINLANDTHYGLGSAVMSNDLERCERLSKALQAGIVWINCAQPSFIQAPWGGIKRSGFGRELGEWGLENYLSVKQVTRYTSDEPWGWYQPPSKL.

Na(+) contacts are provided by Asn-27, Ile-28, Asp-99, and Leu-189. NAD(+) is bound at residue 238–245 (GSSATGSK). Glu-260 serves as the catalytic Proton acceptor. Residues Cys-294 and Glu-393 each coordinate NAD(+). The Nucleophile role is filled by Cys-294. The short motif at 501 to 503 (SKL) is the Microbody targeting signal element.

Belongs to the aldehyde dehydrogenase family. Forms homodimers.

The protein localises to the peroxisome. The enzyme catalyses 3-aminopropanal + NAD(+) + H2O = beta-alanine + NADH + 2 H(+). It carries out the reaction 4-aminobutanal + NAD(+) + H2O = 4-aminobutanoate + NADH + 2 H(+). It catalyses the reaction 4-guanidinobutanal + NAD(+) + H2O = 4-guanidinobutanoate + NADH + 2 H(+). Its pathway is amine and polyamine biosynthesis; betaine biosynthesis via choline pathway; betaine from betaine aldehyde: step 1/1. In terms of biological role, dehydrogenase that catalyzes the oxidation of several aminoaldehydes. Metabolizes and detoxifies aldehyde products of polyamine degradation to non-toxic amino acids. Catalyzes the oxidation of 3-aminopropanal to beta-alanine. Catalyzes the oxidation of 4-aminobutanal to 4-aminobutanoate. Catalyzes the oxidation of 4-guanidinobutanal to 4-guanidinobutanoate. This Pisum sativum (Garden pea) protein is Aminoaldehyde dehydrogenase 1, peroxisomal.